The chain runs to 325 residues: Elongation factor P--(R)-beta-lysine ligase (325 aa).

Residue S76 to E78 participates in substrate binding. ATP-binding positions include R100–E102 and N109. Position 118 (Y118) interacts with substrate. E244 to L245 is an ATP binding site. Position 251 (E251) interacts with substrate. Residue G300 participates in ATP binding.

This sequence belongs to the class-II aminoacyl-tRNA synthetase family. EpmA subfamily. In terms of assembly, homodimer.

It carries out the reaction D-beta-lysine + L-lysyl-[protein] + ATP = N(6)-((3R)-3,6-diaminohexanoyl)-L-lysyl-[protein] + AMP + diphosphate + H(+). Functionally, with EpmB is involved in the beta-lysylation step of the post-translational modification of translation elongation factor P (EF-P). Catalyzes the ATP-dependent activation of (R)-beta-lysine produced by EpmB, forming a lysyl-adenylate, from which the beta-lysyl moiety is then transferred to the epsilon-amino group of a conserved specific lysine residue in EF-P. The sequence is that of Elongation factor P--(R)-beta-lysine ligase from Edwardsiella ictaluri (strain 93-146).